Reading from the N-terminus, the 210-residue chain is Protein GrpE (210 aa).

A disordered region spans residues 1–31 (MAKDPQTPTDEELARAERDAEPQPGDATDDE). Over residues 12–21 (ELARAERDAE) the composition is skewed to basic and acidic residues.

The protein belongs to the GrpE family. Homodimer.

It is found in the cytoplasm. In terms of biological role, participates actively in the response to hyperosmotic and heat shock by preventing the aggregation of stress-denatured proteins, in association with DnaK and GrpE. It is the nucleotide exchange factor for DnaK and may function as a thermosensor. Unfolded proteins bind initially to DnaJ; upon interaction with the DnaJ-bound protein, DnaK hydrolyzes its bound ATP, resulting in the formation of a stable complex. GrpE releases ADP from DnaK; ATP binding to DnaK triggers the release of the substrate protein, thus completing the reaction cycle. Several rounds of ATP-dependent interactions between DnaJ, DnaK and GrpE are required for fully efficient folding. In Chromohalobacter salexigens (strain ATCC BAA-138 / DSM 3043 / CIP 106854 / NCIMB 13768 / 1H11), this protein is Protein GrpE.